The chain runs to 310 residues: Apolipoprotein E (310 aa).

An N-terminal signal peptide occupies residues 1–18 (MKALWAVLLATLLTGCLS). A run of 8 repeats spans residues 72–93 (VLME…EQLG), 94–115 (PVAE…ARLG), 116–137 (ADME…TMLG), 138–159 (QSTE…KRLM), 160–181 (RDAE…EGAE), 182–203 (RGVS…QRTA), 204–225 (NLGA…DRLR), and 226–247 (GRLE…EHME). Positions 72–247 (VLMEDTMTEV…RLEEMREHME (176 aa)) are 8 X 22 AA approximate tandem repeats. Met135 is modified (methionine sulfoxide). The tract at residues 150–160 (HLRKMRKRLMR) is LDL and other lipoprotein receptors binding. Residues 150–160 (HLRKMRKRLMR) are LDL receptor binding. Residue 154-157 (MRKR) participates in heparin binding. Residues 202–282 (TANLGAGVAQ…GWFEPLVEDM (81 aa)) form a lipid-binding and lipoprotein association region. Position 221 to 228 (221 to 228 (GDRLRGRL)) interacts with heparin. Residues 258–310 (QQIRLQAEIFQARLKGWFEPLVEDMQRQLANLVEKIQASTNSVLSTSVPQENQ) are homooligomerization. Positions 270–282 (RLKGWFEPLVEDM) are specificity for association with VLDL.

Belongs to the apolipoprotein A1/A4/E family. In terms of assembly, homotetramer. May interact with ABCA1; functionally associated with ABCA1 in the biogenesis of HDLs. May interact with APP/A4 amyloid-beta peptide; the interaction is extremely stable in vitro but its physiological significance is unclear. May interact with MAPT. May interact with MAP2. In the cerebrospinal fluid, interacts with secreted SORL1. Interacts with PMEL; this allows the loading of PMEL luminal fragment on ILVs to induce fibril nucleation. In terms of processing, APOE exists as multiple glycosylated and sialylated glycoforms within cells and in plasma. The extent of glycosylation and sialylation are tissue and context specific. Post-translationally, glycated in plasma VLDL. Phosphorylated by FAM20C in the extracellular medium.

The protein resides in the secreted. It localises to the extracellular space. The protein localises to the extracellular matrix. Its subcellular location is the extracellular vesicle. It is found in the endosome. The protein resides in the multivesicular body. Functionally, APOE is an apolipoprotein, a protein associating with lipid particles, that mainly functions in lipoprotein-mediated lipid transport between organs via the plasma and interstitial fluids. APOE is a core component of plasma lipoproteins and is involved in their production, conversion and clearance. Apolipoproteins are amphipathic molecules that interact both with lipids of the lipoprotein particle core and the aqueous environment of the plasma. As such, APOE associates with chylomicrons, chylomicron remnants, very low density lipoproteins (VLDL) and intermediate density lipoproteins (IDL) but shows a preferential binding to high-density lipoproteins (HDL). It also binds a wide range of cellular receptors including the LDL receptor/LDLR, the LDL receptor-related proteins LRP1, LRP2 and LRP8 and the very low-density lipoprotein receptor/VLDLR that mediate the cellular uptake of the APOE-containing lipoprotein particles. Finally, APOE also has a heparin-binding activity and binds heparan-sulfate proteoglycans on the surface of cells, a property that supports the capture and the receptor-mediated uptake of APOE-containing lipoproteins by cells. A main function of APOE is to mediate lipoprotein clearance through the uptake of chylomicrons, VLDLs, and HDLs by hepatocytes. APOE is also involved in the biosynthesis by the liver of VLDLs as well as their uptake by peripheral tissues ensuring the delivery of triglycerides and energy storage in muscle, heart and adipose tissues. By participating in the lipoprotein-mediated distribution of lipids among tissues, APOE plays a critical role in plasma and tissues lipid homeostasis. APOE is also involved in two steps of reverse cholesterol transport, the HDLs-mediated transport of cholesterol from peripheral tissues to the liver, and thereby plays an important role in cholesterol homeostasis. First, it is functionally associated with ABCA1 in the biogenesis of HDLs in tissues. Second, it is enriched in circulating HDLs and mediates their uptake by hepatocytes. APOE also plays an important role in lipid transport in the central nervous system, regulating neuron survival and sprouting. The polypeptide is Apolipoprotein E (Apoe) (Grammomys surdaster (African woodland thicket rat)).